The primary structure comprises 484 residues: Ribosome biogenesis protein NOP53 (484 aa).

Disordered stretches follow at residues 1–51 and 304–356; these read MAAG…WRRL and ESDG…AARK. Residue alanine 2 is modified to N-acetylalanine. Serine 29 carries the phosphoserine modification. Over residues 35-49 the composition is skewed to basic residues; sequence RRRRRGPRNKKRGWR. Positions 148–437 are mediates interaction with CDKN2A/isoform tumor suppressor ARF; the sequence is KEELWEKLAK…SELSGSLRTL (290 aa). Serine 305 is modified (phosphoserine). Over residues 336 to 348 the composition is skewed to basic and acidic residues; that stretch reads PEKRMEKKTEQQR. Residues 348–392 are mediates interaction with human herpesvirus 8 protein ORF16; that stretch reads RRREKAARKLRVQQAALRAARLQHQELFRLRGIKAQVARRLAELA. Nucleolar localization signal stretches follow at residues 353 to 401 and 402 to 484; these read AARK…RRIR and RLAE…EIQL.

The protein belongs to the NOP53 family. Homooligomer. Interacts with PTEN; regulates PTEN phosphorylation and increases its stability. Interacts with RPL11; retains RPL11 into the nucleolus. Interacts with CDKN2A/isoform tumor suppressor ARF; the interaction is direct and promotes ARF nucleoplasmic relocalization and ubiquitin-mediated proteasomal degradation. Interacts with NPM1; the interaction is direct and competitive with MYC. Interacts with NF2 (via FERM domain); the interaction is direct. Interacts with p53/TP53 (via the oligomerization region); the interaction is direct and may prevent the MDM2-mediated proteasomal degradation of p53/TP53. Interacts with RIGI; may regulate RIGI through USP15-mediated 'Lys-63'-linked deubiquitination. Interacts with UBTF. In terms of processing, ubiquitin-mediated proteasomal degradation is regulated by c-JUN. It is associated with relocalization to the nucleoplasm and decreased homooligomerization. Phosphorylated upon DNA damage probably by ATM and DNA-PK; may regulate NOP53 degradation.

Its subcellular location is the nucleus. The protein localises to the nucleolus. It is found in the nucleoplasm. In terms of biological role, nucleolar protein which is involved in the integration of the 5S RNP into the ribosomal large subunit during ribosome biogenesis. In ribosome biogenesis, may also play a role in rRNA transcription. Also functions as a nucleolar sensor that regulates the activation of p53/TP53 in response to ribosome biogenesis perturbation, DNA damage and other stress conditions. DNA damage or perturbation of ribosome biogenesis disrupt the interaction between NOP53 and RPL11 allowing RPL11 transport to the nucleoplasm where it can inhibit MDM2 and allow p53/TP53 activation. It may also positively regulate the function of p53/TP53 in cell cycle arrest and apoptosis through direct interaction, preventing its MDM2-dependent ubiquitin-mediated proteasomal degradation. Originally identified as a tumor suppressor, it may also play a role in cell proliferation and apoptosis by positively regulating the stability of PTEN, thereby antagonizing the PI3K-AKT/PKB signaling pathway. May also inhibit cell proliferation and increase apoptosis through its interaction with NF2. May negatively regulate NPM1 by regulating its nucleoplasmic localization, oligomerization and ubiquitin-mediated proteasomal degradation. Thereby, may prevent NPM1 interaction with MYC and negatively regulate transcription mediated by the MYC-NPM1 complex. May also regulate cellular aerobic respiration. In the cellular response to viral infection, may play a role in the attenuation of interferon-beta through the inhibition of RIGI. The sequence is that of Ribosome biogenesis protein NOP53 from Mus musculus (Mouse).